The sequence spans 332 residues: GDP-mannose transporter 2 (332 aa).

The Cytoplasmic segment spans residues 1–12 (MSSLKVSQQDKK). Residues 13–33 (WVNSGSVAILAYCASSILMTI) traverse the membrane as a helical segment. Topologically, residues 34 to 47 (TNKVVMSDRTFNMN) are lumenal. Residues 48–68 (FLLLFIQSLVCVITLLVLKVL) form a helical membrane-spanning segment. Topologically, residues 69–84 (GSVNFRSFNKTDARNW) are cytoplasmic. Residues 85–105 (FPISICLVLMIFTSSKSLQYL) form a helical membrane-spanning segment. Over 106-108 (SVP) the chain is Lumenal. Residues 109 to 129 (VYTIFKNLTIIVIAYGEVLFF) form a helical membrane-spanning segment. At 130-131 (GS) the chain is on the cytoplasmic side. Residues 132-152 (SVGNMELGSFALMIVSSLIAA) traverse the membrane as a helical segment. The Lumenal segment spans residues 153–174 (HGDYLHSVERLKKMLGPNVSFS). N170 carries N-linked (GlcNAc...) asparagine glycosylation. A helical transmembrane segment spans residues 175–195 (FIVNIGYFWIAANCFASALFV). Topologically, residues 196–211 (LLMRKRIQVTNFKDFD) are cytoplasmic. Residues 212 to 232 (TMFYNNVLSLPLLLLGSYLFE) form a helical membrane-spanning segment. The Lumenal segment spans residues 233–248 (DWSQENLLPHVDIDNL). Residue N247 is glycosylated (N-linked (GlcNAc...) asparagine). The helical transmembrane segment at 249-269 (STMIISGLASVAISYCSGWCV) threads the bilayer. The Cytoplasmic portion of the chain corresponds to 270–274 (RVTSS). A helical transmembrane segment spans residues 275–295 (TTYSMVGALNKLPIALTGFLF). Residues 296 to 300 (NDAAR) lie on the Lumenal side of the membrane. Residues 301 to 321 (NLSSAASILLGFASGIIYAVA) form a helical membrane-spanning segment. Residues 322–332 (KQKKLQNSEKI) are Cytoplasmic-facing.

The protein belongs to the TPT transporter family. SLC35D subfamily. In terms of assembly, homooligomer.

It is found in the golgi apparatus membrane. Its subcellular location is the cytoplasmic vesicle membrane. It localises to the endoplasmic reticulum membrane. Functionally, involved in the import of GDP-mannose from the cytoplasm into the Golgi lumen. The protein is GDP-mannose transporter 2 (VRG4-2) of Vanderwaltozyma polyspora (strain ATCC 22028 / DSM 70294 / BCRC 21397 / CBS 2163 / NBRC 10782 / NRRL Y-8283 / UCD 57-17) (Kluyveromyces polysporus).